The following is a 282-amino-acid chain: E3 ubiquitin-protein ligase SIAH1B (282 aa).

Polar residues predominate over residues 1–17 (MSRQAATALSTGTSKCP). The tract at residues 1–23 (MSRQAATALSTGTSKCPPSQRVP) is disordered. The residue at position 19 (S19) is a Phosphoserine; by ATM and ATR. An RING-type zinc finger spans residues 41–76 (CPVCFDYVLPPILQCQSGHLVCSNCRPKLTCCPTCR). Residues 90–282 (VANSVLFPCK…LGINVTISMC (193 aa)) are SBD. The segment at 93-153 (SVLFPCKYSA…VMPHLMHQHK (61 aa)) adopts an SIAH-type zinc-finger fold. Residues C98, C105, H117, C121, C128, C135, H147, and H152 each coordinate Zn(2+).

This sequence belongs to the SINA (Seven in absentia) family. Homodimer. Post-translationally, phosphorylated on Ser-19 by ATM and ATR. Widely expressed at low level in embryos and adults. Due to the high similarity between SIAH1A and SIAH1B, it is difficult to distinguish its own tissue specificity. Overexpressed in endothelial cells of adult lung.

It localises to the cytoplasm. Its subcellular location is the nucleus. The enzyme catalyses S-ubiquitinyl-[E2 ubiquitin-conjugating enzyme]-L-cysteine + [acceptor protein]-L-lysine = [E2 ubiquitin-conjugating enzyme]-L-cysteine + N(6)-ubiquitinyl-[acceptor protein]-L-lysine.. Its pathway is protein modification; protein ubiquitination. Its function is as follows. E3 ubiquitin-protein ligase that mediates ubiquitination and subsequent proteasomal degradation of target proteins. E3 ubiquitin ligases accept ubiquitin from an E2 ubiquitin-conjugating enzyme in the form of a thioester and then directly transfers the ubiquitin to targeted substrates. Mediates E3 ubiquitin ligase activity either through direct binding to substrates or by functioning as the essential RING domain subunit of larger E3 complexes. The protein is E3 ubiquitin-protein ligase SIAH1B (Siah1b) of Mus musculus (Mouse).